Consider the following 127-residue polypeptide: Putative lipoprotein LprJ (127 aa).

The N-terminal stretch at Met-1–Ser-34 is a signal peptide. Cys-35 is lipidated: N-palmitoyl cysteine. A lipid anchor (S-diacylglycerol cysteine) is attached at Cys-35. Residues Cys-35–Asp-99 are Extracellular-facing. A helical membrane pass occupies residues Met-100–Leu-120. At Met-121–Ala-127 the chain is on the cytoplasmic side.

In terms of assembly, may interact with sensor protein KdpD. Post-translationally, modified by Lgt on Cys-35 with an S-linked diacylglycerol, signal peptide is removed by LspA, modified by Lnt with amide-linked fatty acid.

The protein localises to the cell membrane. In terms of biological role, overexpression induces expression of sensor protein kdpD gene at low K(+) concentrations (0 and 250 uM, tested in M.smegatis). The protein is Putative lipoprotein LprJ (lprJ) of Mycobacterium tuberculosis (strain ATCC 25618 / H37Rv).